The primary structure comprises 311 residues: Putative methylthioribose-1-phosphate isomerase (311 aa).

Substrate contacts are provided by residues 46 to 48, R80, and Q174; that span reads RGA. The active-site Proton donor is the D215. Position 224-225 (224-225) interacts with substrate; that stretch reads NK.

Belongs to the eIF-2B alpha/beta/delta subunits family. MtnA subfamily.

It catalyses the reaction 5-(methylsulfanyl)-alpha-D-ribose 1-phosphate = 5-(methylsulfanyl)-D-ribulose 1-phosphate. Catalyzes the interconversion of methylthioribose-1-phosphate (MTR-1-P) into methylthioribulose-1-phosphate (MTRu-1-P). This Methanothermobacter thermautotrophicus (strain ATCC 29096 / DSM 1053 / JCM 10044 / NBRC 100330 / Delta H) (Methanobacterium thermoautotrophicum) protein is Putative methylthioribose-1-phosphate isomerase.